A 416-amino-acid polypeptide reads, in one-letter code: Probable glucan 1,3-beta-glucosidase A (416 aa).

The N-terminal stretch at Met-1–Ala-22 is a signal peptide. The active-site Proton donor is the Glu-211. 2 disulfide bridges follow: Cys-291-Cys-415 and Cys-316-Cys-342. The active-site Nucleophile is Glu-308. N-linked (GlcNAc...) asparagine glycosylation occurs at Asn-344.

It belongs to the glycosyl hydrolase 5 (cellulase A) family. Monomer. Requires Mn(2+) as cofactor.

It localises to the secreted. It carries out the reaction Successive hydrolysis of beta-D-glucose units from the non-reducing ends of (1-&gt;3)-beta-D-glucans, releasing alpha-glucose.. In terms of biological role, beta-glucanases participate in the metabolism of beta-glucan, the main structural component of the cell wall. It could also function biosynthetically as a transglycosylase. The sequence is that of Probable glucan 1,3-beta-glucosidase A (exgA) from Aspergillus fumigatus (strain ATCC MYA-4609 / CBS 101355 / FGSC A1100 / Af293) (Neosartorya fumigata).